Here is a 665-residue protein sequence, read N- to C-terminus: Protein-arginine deiminase type-2 (665 aa).

The Ca(2+) site is built by Asp123, Asp125, Asp127, Glu131, Asn154, Asp156, Asp158, Asp166, Asp169, Lys171, Asp177, Asp180, Glu354, Asp389, Phe408, Leu411, and Glu412. Cys647 serves as the catalytic Nucleophile.

This sequence belongs to the protein arginine deiminase family. Homodimer. Ca(2+) serves as cofactor. As to expression, spinal cord, submaxillary gland, cerebrum, cerebellum, and skeletal muscle.

It is found in the cytoplasm. It carries out the reaction L-arginyl-[protein] + H2O = L-citrullyl-[protein] + NH4(+). Functionally, catalyzes the deimination of arginine residues of proteins. The protein is Protein-arginine deiminase type-2 (Padi2) of Rattus norvegicus (Rat).